The chain runs to 116 residues: Ribonuclease P protein component (116 aa).

It belongs to the RnpA family. Consists of a catalytic RNA component (M1 or rnpB) and a protein subunit.

The enzyme catalyses Endonucleolytic cleavage of RNA, removing 5'-extranucleotides from tRNA precursor.. Functionally, RNaseP catalyzes the removal of the 5'-leader sequence from pre-tRNA to produce the mature 5'-terminus. It can also cleave other RNA substrates such as 4.5S RNA. The protein component plays an auxiliary but essential role in vivo by binding to the 5'-leader sequence and broadening the substrate specificity of the ribozyme. The sequence is that of Ribonuclease P protein component from Thermoanaerobacter pseudethanolicus (strain ATCC 33223 / 39E) (Clostridium thermohydrosulfuricum).